A 217-amino-acid chain; its full sequence is Ribonuclease HII (217 aa).

An RNase H type-2 domain is found at 26 to 215 (EIVCGVDEAG…VREALDLMAG (190 aa)). A divalent metal cation contacts are provided by Asp32, Glu33, and Asp124.

It belongs to the RNase HII family. Requires Mn(2+) as cofactor. Mg(2+) serves as cofactor.

It is found in the cytoplasm. It carries out the reaction Endonucleolytic cleavage to 5'-phosphomonoester.. Functionally, endonuclease that specifically degrades the RNA of RNA-DNA hybrids. This Burkholderia ambifaria (strain ATCC BAA-244 / DSM 16087 / CCUG 44356 / LMG 19182 / AMMD) (Burkholderia cepacia (strain AMMD)) protein is Ribonuclease HII.